We begin with the raw amino-acid sequence, 182 residues long: Large ribosomal subunit protein uL6 (182 aa).

Belongs to the universal ribosomal protein uL6 family. In terms of assembly, part of the 50S ribosomal subunit.

In terms of biological role, this protein binds to the 23S rRNA, and is important in its secondary structure. It is located near the subunit interface in the base of the L7/L12 stalk, and near the tRNA binding site of the peptidyltransferase center. The sequence is that of Large ribosomal subunit protein uL6 from Caldicellulosiruptor saccharolyticus (strain ATCC 43494 / DSM 8903 / Tp8T 6331).